We begin with the raw amino-acid sequence, 260 residues long: Thrombin-like enzyme acutobin (260 aa).

An N-terminal signal peptide occupies residues 1–18; that stretch reads MVLIRVLANLLILQLSYA. Positions 19 to 24 are excised as a propeptide; the sequence is QKSSEL. The region spanning 25 to 251 is the Peptidase S1 domain; sequence VIGGVECDIN…YNDWIRSITA (227 aa). Intrachain disulfides connect cysteine 31–cysteine 165, cysteine 52–cysteine 68, cysteine 102–cysteine 258, cysteine 144–cysteine 212, cysteine 176–cysteine 191, and cysteine 202–cysteine 227. Histidine 67 acts as the Charge relay system in catalysis. N-linked (GlcNAc...) asparagine glycosylation is found at asparagine 101 and asparagine 105. Aspartate 112 functions as the Charge relay system in the catalytic mechanism. An N-linked (GlcNAc...) asparagine glycan is attached at asparagine 124. The active-site Charge relay system is serine 206. A glycan (N-linked (GlcNAc...) asparagine) is linked at asparagine 253.

Belongs to the peptidase S1 family. Snake venom subfamily. As to quaternary structure, monomer. N-glycosylated. In terms of tissue distribution, expressed by the venom gland.

It is found in the secreted. Thrombin-like snake venom serine protease that coagulates human fibrinogen by hydrolysis of the alpha chains (FGA). This is Thrombin-like enzyme acutobin from Deinagkistrodon acutus (Hundred-pace snake).